The following is a 640-amino-acid chain: Acid beta-fructofuranosidase 2, vacuolar (640 aa).

Positions 1 to 22 are disordered; sequence MDTNTTSYTPLPGDPFLSGPPE. The Cytoplasmic portion of the chain corresponds to 1 to 29; that stretch reads MDTNTTSYTPLPGDPFLSGPPETPRRPLK. A propeptide spans 1-78 (removed in mature form); the sequence is MDTNTTSYTP…HPQSTTNTML (78 aa). The chain crosses the membrane as a helical span at residues 30–49; the sequence is GFAVIFASVIFLMSLVALII. Topologically, residues 50–616 are lumenal; the sequence is HQGPQQPPDV…FSPDAASHSS (567 aa). Substrate-binding positions include 93 to 96, Gln112, Trp120, 155 to 156, 219 to 220, Glu274, and Asp307; these read WMND, WT, and RD. Asp96 is a catalytic residue. Cys464 and Cys512 are disulfide-bonded. A helical transmembrane segment spans residues 617–639; that stretch reads FTPVTVFIKFIVPFGIFLTLYFV. Position 640 (Arg640) is a topological domain, cytoplasmic.

Belongs to the glycosyl hydrolase 32 family. As to expression, expressed in buds, stems, roots and leaves.

Its subcellular location is the membrane. It localises to the vacuole membrane. It carries out the reaction Hydrolysis of terminal non-reducing beta-D-fructofuranoside residues in beta-D-fructofuranosides.. Vacuolar invertase. This is Acid beta-fructofuranosidase 2, vacuolar from Rosa hybrid cultivar.